The primary structure comprises 388 residues: Succinyl-diaminopimelate desuccinylase (388 aa).

H84 contacts Zn(2+). D86 is a catalytic residue. Residue D115 coordinates Zn(2+). The active-site Proton acceptor is E146. Zn(2+)-binding residues include E147, E175, and H360.

Belongs to the peptidase M20A family. DapE subfamily. In terms of assembly, homodimer. Zn(2+) is required as a cofactor. It depends on Co(2+) as a cofactor.

The catalysed reaction is N-succinyl-(2S,6S)-2,6-diaminopimelate + H2O = (2S,6S)-2,6-diaminopimelate + succinate. It functions in the pathway amino-acid biosynthesis; L-lysine biosynthesis via DAP pathway; LL-2,6-diaminopimelate from (S)-tetrahydrodipicolinate (succinylase route): step 3/3. Its function is as follows. Catalyzes the hydrolysis of N-succinyl-L,L-diaminopimelic acid (SDAP), forming succinate and LL-2,6-diaminopimelate (DAP), an intermediate involved in the bacterial biosynthesis of lysine and meso-diaminopimelic acid, an essential component of bacterial cell walls. This Helicobacter pylori (strain G27) protein is Succinyl-diaminopimelate desuccinylase.